A 130-amino-acid polypeptide reads, in one-letter code: Protein ApaG (130 aa).

An ApaG domain is found at 3-127; that stretch reads RAVTRHIEVT…FSLDSPDGKR (125 aa).

The chain is Protein ApaG from Bradyrhizobium sp. (strain ORS 278).